Consider the following 150-residue polypeptide: MADHHFYLKANWPGNRNDVGTIESGNLITSISIPKEMDGPGEGTNPDEMLLGAAATCYIITLAAMMERSGLEKEDLQMESEGIVNVTKGVFTYKKIIHRPSVVLKHDASQDDVALAHKLCKKAESSCMISRAIQGNVELQLEASVKLGGE.

This sequence belongs to the OsmC/Ohr family.

This is an uncharacterized protein from Bacillus subtilis (strain 168).